Consider the following 435-residue polypeptide: Antho-RFamide neuropeptides type 1 (435 aa).

Positions 1–22 (MTTVSYVTILLTVLVQVLTSDA) are cleaved as a signal peptide. Positions 23–193 (KATNNKRELS…SVPGRYGREL (171 aa)) are excised as a propeptide. Q194 bears the Pyrrolidone carboxylic acid mark. F197 carries the post-translational modification Phenylalanine amide. The propeptide occupies 199-201 (REL). F205 bears the Phenylalanine amide mark. Residues 207-209 (REA) constitute a propeptide that is removed on maturation. F213 is modified (phenylalanine amide). The propeptide occupies 215–217 (REL). Position 221 is a phenylalanine amide (F221). Positions 223–225 (REF) are excised as a propeptide. At F229 the chain carries Phenylalanine amide. Residues 230 to 371 (GREDQGRFGR…EDIAEADQGR (142 aa)) are compositionally biased toward basic and acidic residues. Disordered stretches follow at residues 230-374 (GRED…RFGR) and 386-435 (AKKR…AKTS). The propeptide occupies 231–233 (RED). F237 carries the phenylalanine amide modification. A propeptide spanning residues 239–241 (RED) is cleaved from the precursor. At F245 the chain carries Phenylalanine amide. Positions 247 to 249 (RED) are excised as a propeptide. Residue F253 is modified to Phenylalanine amide. Positions 255-257 (RED) are excised as a propeptide. F261 is subject to Phenylalanine amide. A propeptide spanning residues 263 to 265 (RED) is cleaved from the precursor. F269 bears the Phenylalanine amide mark. A propeptide spanning residues 271-273 (RED) is cleaved from the precursor. Phenylalanine amide is present on F277. Residues 279-281 (REL) constitute a propeptide that is removed on maturation. F285 carries the phenylalanine amide modification. The propeptide occupies 287–289 (REF). At F293 the chain carries Phenylalanine amide. A propeptide spanning residues 295-297 (RED) is cleaved from the precursor. F301 is modified (phenylalanine amide). Residues 303–305 (RED) constitute a propeptide that is removed on maturation. F309 bears the Phenylalanine amide mark. Residues 311–313 (REL) constitute a propeptide that is removed on maturation. Position 317 is a phenylalanine amide (F317). Residues 319-321 (RED) constitute a propeptide that is removed on maturation. F325 carries the phenylalanine amide modification. Positions 327–329 (RED) are excised as a propeptide. Residue F333 is modified to Phenylalanine amide. The propeptide occupies 335–342 (REDLAKED). Position 346 is a phenylalanine amide (F346). Positions 348–355 (REDLAKED) are excised as a propeptide. F359 carries the post-translational modification Phenylalanine amide. Residues 361 to 368 (REDIAEAD) constitute a propeptide that is removed on maturation. F372 bears the Phenylalanine amide mark. The propeptide occupies 374-435 (RNAAAAAAAA…KSDDALAKTS (62 aa)). Over residues 398-435 (SDPKPQTRFRDGKDMQEKRKVEKKDKIEKSDDALAKTS) the composition is skewed to basic and acidic residues.

Belongs to the FARP (FMRFamide related peptide) family.

The protein resides in the secreted. Functionally, not known but it could act as a transmitter at neuromuscular synapses. The chain is Antho-RFamide neuropeptides type 1 from Anthopleura elegantissima (Green aggregating anemone).